A 282-amino-acid chain; its full sequence is 2-dehydro-3-deoxyphosphooctonate aldolase (282 aa).

This sequence belongs to the KdsA family.

The protein localises to the cytoplasm. It carries out the reaction D-arabinose 5-phosphate + phosphoenolpyruvate + H2O = 3-deoxy-alpha-D-manno-2-octulosonate-8-phosphate + phosphate. It participates in carbohydrate biosynthesis; 3-deoxy-D-manno-octulosonate biosynthesis; 3-deoxy-D-manno-octulosonate from D-ribulose 5-phosphate: step 2/3. Its pathway is bacterial outer membrane biogenesis; lipopolysaccharide biosynthesis. The chain is 2-dehydro-3-deoxyphosphooctonate aldolase from Bradyrhizobium diazoefficiens (strain JCM 10833 / BCRC 13528 / IAM 13628 / NBRC 14792 / USDA 110).